The following is an 875-amino-acid chain: Importin subunit beta-1 (875 aa).

Met1 is subject to N-acetylmethionine. HEAT repeat units follow at residues 2–31 (ELIT…AAVE), 33–64 (LPTF…IRLL), 84–122 (ANAR…EIPV), 128–159 (LIPQ…ICQD), and 169–201 (SNEI…LNSL). The residue at position 12 (Ser12) is a Phosphoserine. Positions 21–100 (AQKFLERAAV…KNYVLQTLGT (80 aa)) constitute an Importin N-terminal domain. Position 210 is an N6-acetyllysine (Lys210). 14 HEAT repeats span residues 211 to 246 (ESER…IMSL), 252 to 301 (ETYM…EAAE), 313 to 359 (YAKG…TCCE), 363 to 393 (VPHV…GSIL), 401 to 437 (LKPL…ICEL), 448 to 484 (LAPL…YEAA), 499 to 536 (SSSF…EIVK), 543 to 591 (YPAV…QNVL), 599 to 638 (ALQI…VEVL), 643 to 680 (LKYM…CRAL), 685 to 723 (LPFC…TLAI), 731 to 775 (LEVV…VQGL), 785 to 828 (DVML…CTAF), and 830 to 872 (KDVL…RKLK). An essential for high affinity interaction with RPL23A region spans residues 285-461 (VCDEEMDLAI…LQCLIEGLSA (177 aa)). Positions 328 to 341 (TLTKQDENDDDDDW) are IAB-binding. Residues 333–418 (DENDDDDDWN…MPTLIELMKD (86 aa)) are ran-GTP binding. Lys834 and Lys866 each carry N6-acetyllysine.

The protein belongs to the importin beta family. Importin beta-1 subfamily. Forms a complex with an importin alpha subunit. Interacts with XPO1. Forms a heterodimer with IPO7. The KPNB1/IPO7 heterodimer interacts with H1 histone. Interacts with SNUPN. Interacts with H2A, H2B, H3 and H4 histones. Component of an import snRNP complex composed of KPNB1, SNUPN, SMN1 and ZNF259. Component of a nuclear export receptor complex composed of KPNB1, Ran, SNUPN and XPO1. Interacts with SRY. Interacts with PRKCI/atypical protein kinase C iota. Interacts with KPNA2. Interacts with KPNA7. Interacts with SNAI1 (via zinc fingers) and SNAI2 (via zinc fingers). Interacts with SLC35G1 and STIM1. Interacts with DCAF8. Interacts with RAN. Interacts with NUMA1 (via C-terminus); this interaction is inhibited by RanGTP. Interacts with ZBED1/hDREF; required for nuclear import of ZBED1/hDREF. Interacts with SRP19. Interacts with RPL23A (via BIB domain), RPS7 and RPL5. Mono-ADP-ribosylated by PARP16.

It is found in the cytoplasm. The protein localises to the nucleus envelope. Functions in nuclear protein import, either in association with an adapter protein, like an importin-alpha subunit, which binds to nuclear localization signals (NLS) in cargo substrates, or by acting as autonomous nuclear transport receptor. Acting autonomously, serves itself as NLS receptor. Docking of the importin/substrate complex to the nuclear pore complex (NPC) is mediated by KPNB1 through binding to nucleoporin FxFG repeats and the complex is subsequently translocated through the pore by an energy requiring, Ran-dependent mechanism. At the nucleoplasmic side of the NPC, Ran binds to importin-beta and the three components separate and importin-alpha and -beta are re-exported from the nucleus to the cytoplasm where GTP hydrolysis releases Ran from importin. The directionality of nuclear import is thought to be conferred by an asymmetric distribution of the GTP- and GDP-bound forms of Ran between the cytoplasm and nucleus. Mediates autonomously the nuclear import of ribosomal proteins RPL23A, RPS7 and RPL5. In association with IPO7, mediates the nuclear import of H1 histone. In vitro, mediates nuclear import of H2A, H2B, H3 and H4 histones. Imports MRTFA, SNAI1 and PRKCI into the nucleus. The chain is Importin subunit beta-1 (Kpnb1) from Rattus norvegicus (Rat).